Consider the following 286-residue polypeptide: Phosphoribosylaminoimidazole-succinocarboxamide synthase (286 aa).

The protein belongs to the SAICAR synthetase family.

It carries out the reaction 5-amino-1-(5-phospho-D-ribosyl)imidazole-4-carboxylate + L-aspartate + ATP = (2S)-2-[5-amino-1-(5-phospho-beta-D-ribosyl)imidazole-4-carboxamido]succinate + ADP + phosphate + 2 H(+). Its pathway is purine metabolism; IMP biosynthesis via de novo pathway; 5-amino-1-(5-phospho-D-ribosyl)imidazole-4-carboxamide from 5-amino-1-(5-phospho-D-ribosyl)imidazole-4-carboxylate: step 1/2. The protein is Phosphoribosylaminoimidazole-succinocarboxamide synthase of Mannheimia succiniciproducens (strain KCTC 0769BP / MBEL55E).